The primary structure comprises 509 residues: Steroid 17-alpha-hydroxylase/17,20 lyase (509 aa).

Asn-202 contacts substrate. Residue Cys-442 participates in heme binding.

This sequence belongs to the cytochrome P450 family. The cofactor is heme.

The protein localises to the endoplasmic reticulum membrane. The protein resides in the microsome membrane. It carries out the reaction a C21-steroid + reduced [NADPH--hemoprotein reductase] + O2 = a 17alpha-hydroxy-C21-steroid + oxidized [NADPH--hemoprotein reductase] + H2O + H(+). It catalyses the reaction progesterone + reduced [NADPH--hemoprotein reductase] + O2 = 17alpha-hydroxyprogesterone + oxidized [NADPH--hemoprotein reductase] + H2O + H(+). The enzyme catalyses pregnenolone + reduced [NADPH--hemoprotein reductase] + O2 = 17alpha-hydroxypregnenolone + oxidized [NADPH--hemoprotein reductase] + H2O + H(+). The catalysed reaction is 17alpha-hydroxyprogesterone + reduced [NADPH--hemoprotein reductase] + O2 = androst-4-ene-3,17-dione + acetate + oxidized [NADPH--hemoprotein reductase] + H2O + 2 H(+). It carries out the reaction 17alpha-hydroxyprogesterone + reduced [NADPH--hemoprotein reductase] + O2 = 16alpha,17alpha-dihydroxyprogesterone + oxidized [NADPH--hemoprotein reductase] + H2O + H(+). It catalyses the reaction 16alpha,17alpha-dihydroxyprogesterone + reduced [NADPH--hemoprotein reductase] + O2 = 6beta,16alpha,17alpha-trihydroxyprogesterone + oxidized [NADPH--hemoprotein reductase] + H2O + H(+). The enzyme catalyses 17alpha-hydroxypregnenolone + reduced [NADPH--hemoprotein reductase] + O2 = 3beta-hydroxyandrost-5-en-17-one + acetate + oxidized [NADPH--hemoprotein reductase] + H2O + 2 H(+). The catalysed reaction is 16alpha,17alpha-dihydroxypregnenolone + reduced [NADPH--hemoprotein reductase] + O2 = 3beta,16alpha-dihydroxy-androst-5-en-17-one + acetate + oxidized [NADPH--hemoprotein reductase] + H2O + 2 H(+). It carries out the reaction 3beta-hydroxyandrost-5-en-17-one + reduced [NADPH--hemoprotein reductase] + O2 = 3beta,16alpha-dihydroxy-androst-5-en-17-one + oxidized [NADPH--hemoprotein reductase] + H2O + H(+). It catalyses the reaction androst-4-ene-3,17-dione + reduced [NADPH--hemoprotein reductase] + O2 = 16alpha-hydroxyandrost-4-ene-3,17-dione + oxidized [NADPH--hemoprotein reductase] + H2O + H(+). The protein operates within steroid hormone biosynthesis. Its pathway is steroid biosynthesis; glucocorticoid biosynthesis. Regulated predominantly by intracellular cAMP levels. The 17,20-lyase activity is stimulated by cytochrome b5, which acts as an allosteric effector increasing the Vmax of the lyase activity. In terms of biological role, a cytochrome P450 monooxygenase involved in corticoid and androgen biosynthesis. Catalyzes 17-alpha hydroxylation of C21 steroids, which is common for both pathways. A second oxidative step, required only for androgen synthesis, involves an acyl-carbon cleavage. The 17-alpha hydroxy intermediates, as part of adrenal glucocorticoids biosynthesis pathway, are precursors of cortisol. Hydroxylates steroid hormones, pregnenolone and progesterone to form 17-alpha hydroxy metabolites, followed by the cleavage of the C17-C20 bond to form C19 steroids, dehydroepiandrosterone (DHEA) and androstenedione. Has 16-alpha hydroxylase activity. Catalyzes 16-alpha hydroxylation of 17-alpha hydroxy pregnenolone, followed by the cleavage of the C17-C20 bond to form 16-alpha-hydroxy DHEA. Also 16-alpha hydroxylates androgens, relevant for estriol synthesis. Mechanistically, uses molecular oxygen inserting one oxygen atom into a substrate, and reducing the second into a water molecule, with two electrons provided by NADPH via cytochrome P450 reductase (CPR; NADPH-ferrihemoprotein reductase). The chain is Steroid 17-alpha-hydroxylase/17,20 lyase (CYP17A1) from Ovis aries (Sheep).